A 703-amino-acid polypeptide reads, in one-letter code: Polyribonucleotide nucleotidyltransferase (703 aa).

Residues aspartate 488 and aspartate 494 each contribute to the Mg(2+) site. The region spanning 555–614 (PRLYVMKINPEKIRDVIGKGGAVIRALTEETGTQINIEEDGTITIASNDSAKADEAKRRI) is the KH domain. The 69-residue stretch at 624–692 (GKVYEGAITK…EKGRVKLSMK (69 aa)) folds into the S1 motif domain.

Belongs to the polyribonucleotide nucleotidyltransferase family. Mg(2+) is required as a cofactor.

It localises to the cytoplasm. It carries out the reaction RNA(n+1) + phosphate = RNA(n) + a ribonucleoside 5'-diphosphate. Its function is as follows. Involved in mRNA degradation. Catalyzes the phosphorolysis of single-stranded polyribonucleotides processively in the 3'- to 5'-direction. The chain is Polyribonucleotide nucleotidyltransferase from Polaromonas naphthalenivorans (strain CJ2).